Consider the following 588-residue polypeptide: Adenylate kinase 5, chloroplastic (588 aa).

The disordered stretch occupies residues 1–34 (MASLSLSSAHFSSTSSSSRSSISTSSLSPSSTSL). A chloroplast-targeting transit peptide spans 1–73 (MASLSLSSAH…SFSTSNSQIR (73 aa)). 89-94 (ASGKGT) lines the ATP pocket. An NMP region spans residues 109-138 (STGDLLRAEVSSGTDIGKRAKEFMNSGSLV). Residues arginine 115, 136 to 138 (SLV), 165 to 168 (GFPR), and glutamine 172 each bind AMP. The tract at residues 202–235 (GRRLDPVTGKIYHIKNYPPESDEIKARLVTRPDD) is LID. An ATP-binding site is contributed by arginine 203. Residues arginine 232 and arginine 243 each contribute to the AMP site.

The protein belongs to the adenylate kinase family. As to quaternary structure, monomer.

Its subcellular location is the plastid. The protein resides in the chloroplast. It catalyses the reaction AMP + ATP = 2 ADP. Its function is as follows. Catalyzes the reversible transfer of the terminal phosphate group between ATP and AMP. The polypeptide is Adenylate kinase 5, chloroplastic (Arabidopsis thaliana (Mouse-ear cress)).